We begin with the raw amino-acid sequence, 231 residues long: F-box protein SKIP8 (231 aa).

Residues 1–24 (MPSTPLANGGTPPMGGGERTTVTT) are disordered. The region spanning 34-80 (VSMMEQLVPEITTHALSYLDYPSLCRLSMTNSLMRKAANDDNAWKAL) is the F-box domain.

In terms of assembly, part of a SCF (ASK-cullin-F-box) protein ligase complex. Interacts with SKP1A/ASK1.

Its pathway is protein modification; protein ubiquitination. In terms of biological role, component of SCF(ASK-cullin-F-box) E3 ubiquitin ligase complexes, which may mediate the ubiquitination and subsequent proteasomal degradation of target proteins. In Arabidopsis thaliana (Mouse-ear cress), this protein is F-box protein SKIP8 (SKIP8).